The sequence spans 96 residues: Citrate lyase acyl carrier protein (96 aa).

Ser14 is subject to O-(phosphoribosyl dephospho-coenzyme A)serine.

This sequence belongs to the CitD family. In terms of assembly, oligomer with a subunit composition of (alpha,beta,gamma)6.

It is found in the cytoplasm. Its function is as follows. Covalent carrier of the coenzyme of citrate lyase. The protein is Citrate lyase acyl carrier protein of Lactiplantibacillus plantarum (strain ATCC BAA-793 / NCIMB 8826 / WCFS1) (Lactobacillus plantarum).